The chain runs to 235 residues: SMN complex subunit yip11/gem2 (235 aa).

The tract at residues 1 to 34 is disordered; it reads MPSKRKRNPLQYQTSGSLDEETNQRSAFPQIDNN. Residues 24-34 are compositionally biased toward polar residues; it reads QRSAFPQIDNN. A phosphoserine mark is found at serine 117 and serine 118.

It belongs to the gemin-2 family. As to quaternary structure, part of the core SMN complex at least composed of smn1, yip11/gem2, gem6, gem7 and gem8. Interacts with smn1; the interaction is direct.

It is found in the nucleus. Functionally, the SMN complex catalyzes the assembly of small nuclear ribonucleoproteins (snRNPs), the building blocks of the spliceosome, and thereby plays an important role in the splicing of cellular pre-mRNAs. Most spliceosomal snRNPs contain a common set of Sm proteins smb1, smd1, smd2, smd3, sme1, smf1 and smg1 that assemble in a heptameric protein ring on the Sm site of the small nuclear RNA to form the core snRNP. In the cytosol, the Sm proteins smd1, smd2, sme1, smf1 and smg1 (5Sm) are trapped in an inactive 6S pICln-Sm complex by the chaperone saf5. To complete assembly of core snRNPs, the SMN complex accepts 5Sm from saf5. Binding of snRNA inside 5Sm ultimately triggers eviction of the SMN complex, thereby allowing binding of smd3 and smb1 to complete assembly of the core snRNP. Within the SMN complex, yip11/gem2 constrains the conformation of 5Sm, thereby promoting 5Sm binding to snRNA containing the snRNP code (a nonameric Sm site and a 3'-adjacent stem-loop), thus preventing progression of assembly until a cognate substrate is bound. The polypeptide is SMN complex subunit yip11/gem2 (yip11) (Schizosaccharomyces pombe (strain 972 / ATCC 24843) (Fission yeast)).